We begin with the raw amino-acid sequence, 669 residues long: MGLLVLGTPLDWPESKKYCDYVRENGIMQFLHMYDTYISKKQDVLLWGDEIECIVVSMDDKSKKARVSLRQEDILNALGKYEETFRHVDFGPVYAALRNETCPKKIDAILSEVAKNPADYVERIGGNSNKDTIEITSSTKPHAQNAVPTFHPEYGRYMLESTPGAPYGSTLKDFTFVEYNMRLRRKIIENHLLPNELPLTITNFFRLGTPGFTDPEVEANGAISRSFFLPDDVINTHVRFPTLTANIRQRRGRKVAMNVPIFFDKNTIKPFHDPTVPWDRNLFPEDANARDGAALDNHIYMDSMGFGMGCCCLQITFQAKSCDEARLLYDQLTPITPLMLALSAGTPAFRGYLADQDCRWNVIAGAVDDRTEEEMKTVPKSRYDSVDLYISNDKRNLPEYNDVPVVINQDCYDKLIKDCIDERLAKHMAHIFSRDPLVIFSDSILQDNSVSNAHFENLNSTNWQSMRFKPPPPGSDIGWRVEFRSMEIQITDFENAAYSIFVVMLSRAILSFNLNLYMPISLVDENMKAAHARDAIHRKKFWFRCNPFPDASTDDESGQFRQLTIDELFNGEHRENGFPGLITIVRSYLYSCNPDAKTICLIERYIRLISQRANGQCLTAASWIRNFITTHPSYKQDSVVNDEINYDLIRRIAKIVDGDYDDTLLGKCS.

Belongs to the glutamate--cysteine ligase type 3 family. As to quaternary structure, heterodimer of a catalytic heavy chain and a regulatory light chain.

The catalysed reaction is L-cysteine + L-glutamate + ATP = gamma-L-glutamyl-L-cysteine + ADP + phosphate + H(+). The protein operates within sulfur metabolism; glutathione biosynthesis; glutathione from L-cysteine and L-glutamate: step 1/2. In terms of biological role, catalyzes the ATP-dependent ligation of L-glutamate and L-cysteine and participates in the first and rate-limiting step in glutathione biosynthesis. In Schizosaccharomyces pombe (strain 972 / ATCC 24843) (Fission yeast), this protein is Glutamate--cysteine ligase (gcs1).